Reading from the N-terminus, the 278-residue chain is Potassium/proton antiporter CemA (278 aa).

Transmembrane regions (helical) follow at residues 61-81, 155-175, 203-223, and 238-258; these read IFLLLISPVLVNQASKFFDFG, AVKNILSDILSIAVFILLMIT, IILFTDMFVGFHSPHGWEVII, and FIFLFISTFPVILDTIFKYWI.

The protein belongs to the CemA family.

It is found in the plastid. The protein localises to the chloroplast inner membrane. The enzyme catalyses K(+)(in) + H(+)(out) = K(+)(out) + H(+)(in). Functionally, contributes to K(+)/H(+) antiport activity by supporting proton efflux to control proton extrusion and homeostasis in chloroplasts in a light-dependent manner to modulate photosynthesis. Prevents excessive induction of non-photochemical quenching (NPQ) under continuous-light conditions. Indirectly promotes efficient inorganic carbon uptake into chloroplasts. The sequence is that of Potassium/proton antiporter CemA from Porphyra purpurea (Red seaweed).